The primary structure comprises 360 residues: Pyrimidine monooxygenase RutA (360 aa).

FMN is bound by residues Ile49 to Lys50, Asn115, Glu124, Arg140 to Tyr141, and Ser190.

The protein belongs to the NtaA/SnaA/DszA monooxygenase family. RutA subfamily.

The enzyme catalyses uracil + FMNH2 + NADH + O2 = (Z)-3-ureidoacrylate + FMN + NAD(+) + H2O + H(+). It catalyses the reaction thymine + FMNH2 + NADH + O2 = (Z)-2-methylureidoacrylate + FMN + NAD(+) + H2O + H(+). Functionally, catalyzes the pyrimidine ring opening between N-3 and C-4 by an unusual flavin hydroperoxide-catalyzed mechanism, adding oxygen atoms in the process to yield ureidoacrylate peracid, that immediately reacts with FMN forming ureidoacrylate and FMN-N(5)-oxide. The FMN-N(5)-oxide reacts spontaneously with NADH to produce FMN. Requires the flavin reductase RutF to regenerate FMN in vivo. This is Pyrimidine monooxygenase RutA from Pseudomonas savastanoi pv. phaseolicola (strain 1448A / Race 6) (Pseudomonas syringae pv. phaseolicola (strain 1448A / Race 6)).